The primary structure comprises 102 residues: Large ribosomal subunit protein uL24 (102 aa).

The interval 1-22 (MHVKKGDTVQVMSGKDKGKQGV) is disordered.

It belongs to the universal ribosomal protein uL24 family. Part of the 50S ribosomal subunit.

Its function is as follows. One of two assembly initiator proteins, it binds directly to the 5'-end of the 23S rRNA, where it nucleates assembly of the 50S subunit. Functionally, one of the proteins that surrounds the polypeptide exit tunnel on the outside of the subunit. The polypeptide is Large ribosomal subunit protein uL24 (Exiguobacterium sp. (strain ATCC BAA-1283 / AT1b)).